The following is a 474-amino-acid chain: 3-isopropylmalate dehydratase large subunit (474 aa).

C353, C414, and C417 together coordinate [4Fe-4S] cluster.

It belongs to the aconitase/IPM isomerase family. LeuC type 1 subfamily. In terms of assembly, heterodimer of LeuC and LeuD. Requires [4Fe-4S] cluster as cofactor.

It carries out the reaction (2R,3S)-3-isopropylmalate = (2S)-2-isopropylmalate. The protein operates within amino-acid biosynthesis; L-leucine biosynthesis; L-leucine from 3-methyl-2-oxobutanoate: step 2/4. Its function is as follows. Catalyzes the isomerization between 2-isopropylmalate and 3-isopropylmalate, via the formation of 2-isopropylmaleate. In Teredinibacter turnerae (strain ATCC 39867 / T7901), this protein is 3-isopropylmalate dehydratase large subunit.